The primary structure comprises 317 residues: Transaldolase (317 aa).

Lys-125 (schiff-base intermediate with substrate) is an active-site residue.

Belongs to the transaldolase family. Type 1 subfamily. Homodimer.

Its subcellular location is the cytoplasm. The catalysed reaction is D-sedoheptulose 7-phosphate + D-glyceraldehyde 3-phosphate = D-erythrose 4-phosphate + beta-D-fructose 6-phosphate. It functions in the pathway carbohydrate degradation; pentose phosphate pathway; D-glyceraldehyde 3-phosphate and beta-D-fructose 6-phosphate from D-ribose 5-phosphate and D-xylulose 5-phosphate (non-oxidative stage): step 2/3. Transaldolase is important for the balance of metabolites in the pentose-phosphate pathway. The polypeptide is Transaldolase (Delftia acidovorans (strain DSM 14801 / SPH-1)).